We begin with the raw amino-acid sequence, 547 residues long: Signal recognition particle receptor subunit alpha homolog (547 aa).

The disordered stretch occupies residues 124–174 (LENETDTKSLPVEANNDNSARKKNEYEMKKKGAQSKQTNAPKKGKKQLRKW). Positions 142–153 (SARKKNEYEMKK) are enriched in basic and acidic residues. Residues 343–546 (YTISLIGVNG…SVDWVVDQLM (204 aa)) form an NG domain region. GTP is bound by residues 349-356 (GVNGVGKS), 437-441 (DTAGR), and 498-501 (SKVD).

The protein belongs to the GTP-binding SRP family. In terms of assembly, heterodimer of an alpha and a beta chain.

It is found in the endoplasmic reticulum membrane. In terms of biological role, component of the SRP (signal recognition particle) receptor (SR). Ensures, in conjunction with the signal recognition particle, the correct targeting of the nascent secretory proteins to the endoplasmic reticulum membrane system. GTP hydrolysis may enhance the fidelity of and provide unidirectionality to the targeting reaction. The polypeptide is Signal recognition particle receptor subunit alpha homolog (srp101) (Schizosaccharomyces pombe (strain 972 / ATCC 24843) (Fission yeast)).